We begin with the raw amino-acid sequence, 867 residues long: Nitrate reductase [NADPH] (867 aa).

The segment at 38-58 (DIPLPPPSKEPTEVLSIDKPT) is disordered. C152 contacts Mo-molybdopterin. The region spanning 514 to 589 (NRIIDLQEFK…MPDYHIGTMD (76 aa)) is the Cytochrome b5 heme-binding domain. 2 residues coordinate heme: H549 and H572. The 112-residue stretch at 615-726 (KSWTKATLVK…KGPTGRFEYL (112 aa)) folds into the FAD-binding FR-type domain. FAD contacts are provided by residues 669–672 (RSYT), 686–690 (LVKIY), F691, 700–702 (KMT), and T753. 837-846 (MVLICGPEAM) is an NADP(+) binding site.

Belongs to the nitrate reductase family. Homodimer. It depends on FAD as a cofactor. Heme serves as cofactor. Mo-molybdopterin is required as a cofactor.

It carries out the reaction nitrite + NADP(+) + H2O = nitrate + NADPH + H(+). Nitrate reductase is a key enzyme involved in the first step of nitrate assimilation in plants, fungi and bacteria. This is Nitrate reductase [NADPH] (niaD) from Aspergillus niger.